The primary structure comprises 378 residues: S-(hydroxymethyl)glutathione dehydrogenase (378 aa).

Zn(2+) contacts are provided by C49, H71, C101, C104, C107, C115, and C178.

It belongs to the zinc-containing alcohol dehydrogenase family. Class-III subfamily. As to quaternary structure, homodimer. The cofactor is Zn(2+).

It localises to the cytoplasm. The catalysed reaction is S-(hydroxymethyl)glutathione + NADP(+) = S-formylglutathione + NADPH + H(+). It catalyses the reaction S-(hydroxymethyl)glutathione + NAD(+) = S-formylglutathione + NADH + H(+). It carries out the reaction a primary alcohol + NAD(+) = an aldehyde + NADH + H(+). The enzyme catalyses a secondary alcohol + NAD(+) = a ketone + NADH + H(+). The catalysed reaction is S-nitrosoglutathione + NADH + H(+) = S-(hydroxysulfenamide)glutathione + NAD(+). Has high formaldehyde dehydrogenase activity in the presence of glutathione and catalyzes the oxidation of normal alcohols in a reaction that is not GSH-dependent. In addition, hemithiolacetals other than those formed from GSH, including omega-thiol fatty acids, also are substrates. Also acts as a S-nitroso-glutathione reductase by catalyzing the NADH-dependent reduction of S-nitrosoglutathione. The sequence is that of S-(hydroxymethyl)glutathione dehydrogenase (frmA) from Haemophilus influenzae (strain ATCC 51907 / DSM 11121 / KW20 / Rd).